The sequence spans 282 residues: Elongation factor Ts (282 aa).

An involved in Mg(2+) ion dislocation from EF-Tu region spans residues 79 to 82 (TDFV).

This sequence belongs to the EF-Ts family.

The protein localises to the cytoplasm. Its function is as follows. Associates with the EF-Tu.GDP complex and induces the exchange of GDP to GTP. It remains bound to the aminoacyl-tRNA.EF-Tu.GTP complex up to the GTP hydrolysis stage on the ribosome. In Shewanella woodyi (strain ATCC 51908 / MS32), this protein is Elongation factor Ts.